The chain runs to 371 residues: Aminomethyltransferase (371 aa).

Belongs to the GcvT family. In terms of assembly, the glycine cleavage system is composed of four proteins: P, T, L and H.

The enzyme catalyses N(6)-[(R)-S(8)-aminomethyldihydrolipoyl]-L-lysyl-[protein] + (6S)-5,6,7,8-tetrahydrofolate = N(6)-[(R)-dihydrolipoyl]-L-lysyl-[protein] + (6R)-5,10-methylene-5,6,7,8-tetrahydrofolate + NH4(+). In terms of biological role, the glycine cleavage system catalyzes the degradation of glycine. This chain is Aminomethyltransferase, found in Cutibacterium acnes (strain DSM 16379 / KPA171202) (Propionibacterium acnes).